Consider the following 193-residue polypeptide: dTTP/UTP pyrophosphatase (193 aa).

The Proton acceptor role is filled by Asp-68.

It belongs to the Maf family. YhdE subfamily. It depends on a divalent metal cation as a cofactor.

It is found in the cytoplasm. The catalysed reaction is dTTP + H2O = dTMP + diphosphate + H(+). It catalyses the reaction UTP + H2O = UMP + diphosphate + H(+). In terms of biological role, nucleoside triphosphate pyrophosphatase that hydrolyzes dTTP and UTP. May have a dual role in cell division arrest and in preventing the incorporation of modified nucleotides into cellular nucleic acids. The sequence is that of dTTP/UTP pyrophosphatase from Ruegeria sp. (strain TM1040) (Silicibacter sp.).